A 467-amino-acid chain; its full sequence is 2-succinylbenzoate--CoA ligase (467 aa).

It belongs to the ATP-dependent AMP-binding enzyme family. MenE subfamily.

It carries out the reaction 2-succinylbenzoate + ATP + CoA = 2-succinylbenzoyl-CoA + AMP + diphosphate. The protein operates within quinol/quinone metabolism; 1,4-dihydroxy-2-naphthoate biosynthesis; 1,4-dihydroxy-2-naphthoate from chorismate: step 5/7. Its pathway is quinol/quinone metabolism; menaquinone biosynthesis. Converts 2-succinylbenzoate (OSB) to 2-succinylbenzoyl-CoA (OSB-CoA). The sequence is that of 2-succinylbenzoate--CoA ligase from Listeria monocytogenes serovar 1/2a (strain ATCC BAA-679 / EGD-e).